A 740-amino-acid polypeptide reads, in one-letter code: Transcription activator of gluconeogenesis NCU03938 (740 aa).

A disordered region spans residues M1–P66. Acidic residues predominate over residues S19–K37. Positions G52–R65 are enriched in basic and acidic residues. Positions C75 to C103 form a DNA-binding region, zn(2)-C6 fungal-type. Disordered regions lie at residues P333 to D405, N532 to P579, and A639 to V674. The span at T337 to P351 shows a compositional bias: polar residues. Residues A475–G546 enclose the PAS domain. Over residues A639 to P658 the composition is skewed to low complexity.

Belongs to the ERT1/acuK family.

It is found in the nucleus. Its function is as follows. Transcription factor which regulates nonfermentable carbon utilization. Activator of gluconeogenetic genes. The polypeptide is Transcription activator of gluconeogenesis NCU03938 (Neurospora crassa (strain ATCC 24698 / 74-OR23-1A / CBS 708.71 / DSM 1257 / FGSC 987)).